The following is a 97-amino-acid chain: Acylphosphatase-2 (97 aa).

Residue Ala2 is modified to N-acetylalanine. The Acylphosphatase-like domain occupies 7–97 (SVDYEVFGTV…LEYSNFSIRY (91 aa)). Residues Arg22 and Asn40 contribute to the active site. Ser91 bears the Phosphoserine mark.

The protein belongs to the acylphosphatase family.

It carries out the reaction an acyl phosphate + H2O = a carboxylate + phosphate + H(+). Its physiological role is not yet clear. In Rattus norvegicus (Rat), this protein is Acylphosphatase-2 (Acyp2).